Here is a 249-residue protein sequence, read N- to C-terminus: MSAAFTISKKRKFVADGVFYAELNEFFTRELSEEGYSGCEVRVTPSRSEIIIRATHTQDVLGEKGRRIRELTALVQKRFKFAENTVELYAEKVQNRGLCAVAQCESLRYKLLAGLAVRRAAYGVLRYVMEAGAKGCEVVISGKLRAARAKSMKFADGFMIHSGQPAVDFIDSATRHVLLRQGVLGVKVKIMLPEPKTRQKKSLPDIVVVLDPKEEEPITKPYTVINQPVEAAAAAGQEVVAEQETAVAY.

Residues 23 to 94 form the KH type-2 domain; the sequence is LNEFFTRELS…TVELYAEKVQ (72 aa). 4 positions are modified to phosphoserine: serine 32, serine 37, serine 106, and serine 141.

Belongs to the universal ribosomal protein uS3 family. Component of the small ribosomal subunit (SSU). Mature yeast ribosomes consist of a small (40S) and a large (60S) subunit. The 40S small subunit contains 1 molecule of ribosomal RNA (18S rRNA) and at least 33 different proteins. The large 60S subunit contains 3 rRNA molecules (25S, 5.8S and 5S rRNA) and at least 46 different proteins.

Its subcellular location is the cytoplasm. Functionally, component of the ribosome, a large ribonucleoprotein complex responsible for the synthesis of proteins in the cell. The small ribosomal subunit (SSU) binds messenger RNAs (mRNAs) and translates the encoded message by selecting cognate aminoacyl-transfer RNA (tRNA) molecules. The large subunit (LSU) contains the ribosomal catalytic site termed the peptidyl transferase center (PTC), which catalyzes the formation of peptide bonds, thereby polymerizing the amino acids delivered by tRNAs into a polypeptide chain. The nascent polypeptides leave the ribosome through a tunnel in the LSU and interact with protein factors that function in enzymatic processing, targeting, and the membrane insertion of nascent chains at the exit of the ribosomal tunnel. This is Small ribosomal subunit protein uS3 (rps3) from Schizosaccharomyces pombe (strain 972 / ATCC 24843) (Fission yeast).